The chain runs to 183 residues: Neuronal synaptobrevin (183 aa).

Over residues 1 to 17 (MADAAPAGDAPPNAGAP) the composition is skewed to low complexity. Residues 1–32 (MADAAPAGDAPPNAGAPAGEGGDGEIVGGPHN) form a disordered region. At 1–106 (MADAAPAGDA…KFWLQNLKMM (106 aa)) the chain is on the cytoplasmic side. Residues 18–27 (AGEGGDGEIV) are compositionally biased toward gly residues. Residues 41-101 (RLQQTQAQVD…GKLKRKFWLQ (61 aa)) form the v-SNARE coiled-coil homology domain. The helical transmembrane segment at 107 to 127 (IIMGVIGLVVVGIIANKLGLI) threads the bilayer. Over 128–183 (GGEQPPQYQYPPQYMQPPPPPPQQPAGGQSSLVDAAGAGDGAGAGGSAGAGDHGGV) the chain is Vesicular. Residues 135-183 (YQYPPQYMQPPPPPPQQPAGGQSSLVDAAGAGDGAGAGGSAGAGDHGGV) are disordered. Over residues 141–151 (YMQPPPPPPQQ) the composition is skewed to pro residues. Residues 165-183 (AGDGAGAGGSAGAGDHGGV) are compositionally biased toward gly residues.

The protein belongs to the synaptobrevin family. As to quaternary structure, part of the SNARE core complex containing Snap25 and syntaxin. In terms of tissue distribution, specifically expressed in neurons and synapses.

The protein localises to the cytoplasmic vesicle. It localises to the secretory vesicle. It is found in the synaptic vesicle membrane. Its subcellular location is the early endosome membrane. Functionally, involved in the targeting and/or fusion of transport vesicles to their target membrane. Major SNARE protein of synaptic vesicles which mediates fusion of synaptic vesicles to release neurotransmitters. Essential for fast vesicular exocytosis and activity-dependent neurotransmitter release as well as fast endocytosis that mediates rapid reuse of synaptic vesicles. Also involved in a neuron-specific sort-and-degrade mechanism that promotes endolysosomal degradation and is required for neuronal maintenance. The sequence is that of Neuronal synaptobrevin from Drosophila melanogaster (Fruit fly).